We begin with the raw amino-acid sequence, 393 residues long: Proteasome-activating nucleotidase (393 aa).

Residues 15–53 are a coiled coil; sequence DEVQLVRLLEEKIKSLQIEIENLRKELNYYKAEMEKMLS. ATP-binding positions include 178–183 and tyrosine 317; that span reads GTGKTM. A coiled-coil region spans residues 365-393; sequence MNDLVEAINKINVKRNKMESMKERREKYS. A docks into pockets in the proteasome alpha-ring to cause gate opening region spans residues 391-393; sequence KYS.

This sequence belongs to the AAA ATPase family. Homohexamer. The hexameric complex has a two-ring architecture resembling a top hat that caps the 20S proteasome core at one or both ends. Upon ATP-binding, the C-terminus of PAN interacts with the alpha-rings of the proteasome core by binding to the intersubunit pockets.

It is found in the cytoplasm. In terms of biological role, ATPase which is responsible for recognizing, binding, unfolding and translocation of substrate proteins into the archaeal 20S proteasome core particle. Is essential for opening the gate of the 20S proteasome via an interaction with its C-terminus, thereby allowing substrate entry and access to the site of proteolysis. Thus, the C-termini of the proteasomal ATPase function like a 'key in a lock' to induce gate opening and therefore regulate proteolysis. Unfolding activity requires energy from ATP hydrolysis, whereas ATP binding alone promotes ATPase-20S proteasome association which triggers gate opening, and supports translocation of unfolded substrates. The sequence is that of Proteasome-activating nucleotidase from Saccharolobus solfataricus (strain ATCC 35092 / DSM 1617 / JCM 11322 / P2) (Sulfolobus solfataricus).